Consider the following 360-residue polypeptide: Malonyl CoA-acyl carrier protein transacylase, mitochondrial (360 aa).

The transit peptide at 1-24 (MKLLTFPGQGTSISISILKAIIRN) directs the protein to the mitochondrion. Residues S105 and H235 contribute to the active site.

This sequence belongs to the FabD family.

The protein resides in the mitochondrion. The catalysed reaction is holo-[ACP] + malonyl-CoA = malonyl-[ACP] + CoA. Its pathway is lipid metabolism; fatty acid biosynthesis. Its function is as follows. Involved in biosynthesis of fatty acids in mitochondria. The chain is Malonyl CoA-acyl carrier protein transacylase, mitochondrial (MCT1) from Saccharomyces cerevisiae (strain ATCC 204508 / S288c) (Baker's yeast).